A 1073-amino-acid chain; its full sequence is Pleckstrin homology domain-containing family G member 5 (1073 aa).

Disordered regions lie at residues methionine 1–leucine 28, valine 91–arginine 135, proline 217–leucine 261, glycine 278–glutamate 309, and serine 367–aspartate 388. Composition is skewed to basic and acidic residues over residues proline 217–lysine 231 and glutamate 249–serine 260. Residues serine 367–serine 381 are compositionally biased toward acidic residues. Positions histidine 406–cysteine 598 constitute a DH domain. The 101-residue stretch at glutamine 654–asparagine 754 folds into the PH domain. Disordered stretches follow at residues glutamine 762–glycine 818, threonine 833–aspartate 873, and proline 899–glutamine 925. Residues leucine 777 to glutamate 790 show a composition bias toward acidic residues. Composition is skewed to polar residues over residues serine 791–leucine 809 and valine 844–serine 864. Threonine 793 carries the post-translational modification Phosphothreonine. Serine 798 is subject to Phosphoserine. Pro residues predominate over residues valine 900–serine 915. Position 909 is a phosphothreonine (threonine 909). Serine 911, serine 936, and serine 941 each carry phosphoserine. Positions methionine 993–glutamine 1046 are disordered. Residues glycine 1030–proline 1039 show a composition bias toward polar residues.

Interacts with GIPC1/synectin and RHOA. As to expression, expressed in neurons and glial cells of the peripheral nervous system, with highest levels of expression in the brain and sciatic nerve endoneurium. Isoform 2 is expressed at detectable levels only in malignant cells.

Its subcellular location is the cytoplasm. The protein localises to the perinuclear region. The protein resides in the cell membrane. It is found in the cell junction. It localises to the cell projection. Its subcellular location is the lamellipodium. Functionally, functions as a guanine exchange factor (GEF) for RAB26 and thus regulates autophagy of synaptic vesicles in axon terminal of motoneurons. Involved in the control of neuronal cell differentiation. Plays a role in angiogenesis through regulation of endothelial cells chemotaxis. Also affects the migration, adhesion, and matrix/bone degradation in macrophages and osteoclasts. This Mus musculus (Mouse) protein is Pleckstrin homology domain-containing family G member 5 (Plekhg5).